We begin with the raw amino-acid sequence, 360 residues long: Protein Wnt-2 (360 aa).

A signal peptide spans 1–25 (MNAPLGGIWLWLPLLLTWLTPEVSS). Cystine bridges form between Cys-76–Cys-87, Cys-127–Cys-135, Cys-137–Cys-157, Cys-206–Cys-220, Cys-208–Cys-215, Cys-278–Cys-309, Cys-294–Cys-304, Cys-308–Cys-348, Cys-324–Cys-339, Cys-326–Cys-336, and Cys-331–Cys-332. Ser-212 carries O-palmitoleoyl serine; by PORCN lipidation. N-linked (GlcNAc...) asparagine glycosylation is present at Asn-295.

The protein belongs to the Wnt family. Palmitoleoylation is required for efficient binding to frizzled receptors. Depalmitoleoylation leads to Wnt signaling pathway inhibition.

It localises to the secreted. Its subcellular location is the extracellular space. The protein localises to the extracellular matrix. Ligand for members of the frizzled family of seven transmembrane receptors. Functions in the canonical Wnt signaling pathway that results in activation of transcription factors of the TCF/LEF family. This Dasypus novemcinctus (Nine-banded armadillo) protein is Protein Wnt-2 (WNT2).